The primary structure comprises 3343 residues: Cadherin-3 (3343 aa).

The N-terminal stretch at 1 to 26 (MTIRIFFSIFLLNHLIFFHLFNFTHQ) is a signal peptide. Asn22 carries N-linked (GlcNAc...) asparagine glycosylation. At 27–3228 (FSEETIKFSV…LFSNFSNTTT (3202 aa)) the chain is on the extracellular side. 3 consecutive Cadherin domains span residues 28–117 (SEET…SPIF), 118–229 (PIDV…PPNF), and 242–330 (PNTK…EPNI). N-linked (GlcNAc...) asparagine glycans are attached at residues Asn149, Asn250, Asn288, Asn369, Asn467, and Asn612. The Cadherin 4 domain occupies 632–738 (ICQITEIHVL…EDVNDNVPKF (107 aa)). Asn752, Asn806, Asn941, Asn966, Asn970, Asn985, Asn1042, Asn1335, Asn1425, Asn1429, Asn1557, Asn1563, Asn1597, Asn1624, Asn1695, and Asn1702 each carry an N-linked (GlcNAc...) asparagine glycan. Positions 1279–1368 (RENELMFEIE…ADVNDNKPKI (90 aa)) constitute a Cadherin 5 domain. 3 consecutive Cadherin domains span residues 1545 to 1648 (DKAA…APRF), 1676 to 1756 (AEDL…TPEF), and 1757 to 1857 (ELSS…HPMI). 2 N-linked (GlcNAc...) asparagine glycosylation sites follow: Asn1895 and Asn1900. 3 Cadherin domains span residues 1954–2045 (TVSV…SPRF), 2046–2145 (DQQL…NAPR), and 2146–2245 (FSRI…APIF). N-linked (GlcNAc...) asparagine glycosylation is found at Asn2053, Asn2129, Asn2203, Asn2382, Asn2391, Asn2410, Asn2414, Asn2431, Asn2527, Asn2530, Asn2564, Asn2621, Asn2665, Asn2712, Asn2798, Asn2809, Asn2927, Asn2976, and Asn3045. A Laminin G-like domain is found at 3040 to 3205 (EISVRNGTSH…SSTGTSRNEC (166 aa)). Cysteines 3172 and 3205 form a disulfide. N-linked (GlcNAc...) asparagine glycosylation is found at Asn3222 and Asn3225. Residues 3229–3250 (LILLITLALISLIGFSVCLLAI) form a helical membrane-spanning segment. The Cytoplasmic portion of the chain corresponds to 3251 to 3343 (RRRWRQKSPG…RDGHINMAYL (93 aa)). The segment at 3257-3277 (KSPGDQKQTERSNGWTGHVMP) is disordered.

As to expression, expressed in the anchor cell.

The protein localises to the cell membrane. It localises to the basolateral cell membrane. The protein resides in the cell junction. Cell adhesion protein involved in the control of epithelial morphogenesis. Together with metalloproteinase zmp-1 and hemicentin him-4, plays a role in anchor cell (AC) invasion during postembryonic vulval development. The polypeptide is Cadherin-3 (cdh-3) (Caenorhabditis elegans).